Here is a 166-residue protein sequence, read N- to C-terminus: Small ribosomal subunit protein uS5 (166 aa).

The S5 DRBM domain occupies 11-74 (LQEKLVQVNR…DQARRNMVKV (64 aa)).

Belongs to the universal ribosomal protein uS5 family. Part of the 30S ribosomal subunit. Contacts proteins S4 and S8.

With S4 and S12 plays an important role in translational accuracy. Functionally, located at the back of the 30S subunit body where it stabilizes the conformation of the head with respect to the body. The sequence is that of Small ribosomal subunit protein uS5 from Chromohalobacter salexigens (strain ATCC BAA-138 / DSM 3043 / CIP 106854 / NCIMB 13768 / 1H11).